The chain runs to 256 residues: Nuclear shuttle protein (256 aa).

Positions 21–42 (HSTGKRSRNVSRIDFKRRSSKY) match the Bipartite nuclear localization signal motif. The short motif at 81–96 (SLGKTEPSRSRSYIKL) is the Nuclear localization signal element. Residues 150–187 (ELFGARIHSHGNLAVSSALKDRFYIRHVFKRVISVEKD) are interaction with Arabidopsis thaliana NSI protein.

The protein belongs to the begomovirus nuclear shuttle protein family. As to quaternary structure, binds to single-stranded and double-stranded viral DNA. Interacts with the host nuclear shuttle interacting (NSI) protein. This interaction may allow NSP to recruit NSI monomers to the viral genome and thus regulate nuclear export of viral genome by NSP.

The protein resides in the host nucleus. It localises to the host cytoplasm. It is found in the host cell membrane. Binds to the genomic viral ssDNA, shuttles it into and out of the cell nucleus. Begomoviruses use 2 proteins to transport their DNA from cell to cell. The nuclear shuttle protein (NSP) shuttles it between nucleus and cytoplasm and the movement protein (MP) probably transports the DNA-NSP complex to the cell periphery and facilitates movement across the cell wall. The chain is Nuclear shuttle protein from Solanum lycopersicum (Tomato).